Here is a 175-residue protein sequence, read N- to C-terminus: uncharacterized protein (175 aa).

This is an uncharacterized protein from Mycobacterium tuberculosis (strain ATCC 25618 / H37Rv).